Here is a 1044-residue protein sequence, read N- to C-terminus: GRB10-interacting GYF protein 1 (1044 aa).

A phosphoserine mark is found at S24, S28, S137, and S157. 2 disordered regions span residues 104 to 290 (GKGA…DGLP) and 306 to 424 (ASGA…LEDE). Composition is skewed to basic and acidic residues over residues 148–179 (NPRE…RSGF) and 186–203 (PRKE…SLRE). The residue at position 228 (S228) is a Phosphoserine. Composition is skewed to basic and acidic residues over residues 237–265 (GWRE…EDGR) and 316–332 (GPKE…FRGL). The span at 333 to 350 (EEEEEEEEEPSEGVDEER) shows a compositional bias: acidic residues. A Phosphoserine modification is found at S343. The segment covering 366-379 (NSSSPSSLPALGPL) has biased composition (low complexity). Over residues 389-403 (AVEKELPPAEGDELR) the composition is skewed to basic and acidic residues. S408 carries the phosphoserine modification. One can recognise a GYF domain in the interval 476-524 (ARKWFYKDPQGEIQGPFTTQEMAEWFQAGYFSMSLLVKRGCDEGFQPLG). A phosphoserine mark is found at S540 and S634. A compositionally biased stretch (basic and acidic residues) spans 692 to 706 (KREEEERKRREEKRR). Disordered stretches follow at residues 692–721 (KREE…RQEE), 820–842 (EAGP…LGLW), 855–883 (SLGL…RKKT), 966–987 (QKAS…QEAW), 1000–1019 (NHST…RALM), and 1024–1044 (PSIL…VDDY). Over residues 829 to 839 (DKSGGSSGGNL) the composition is skewed to gly residues. Low complexity-rich tracts occupy residues 855-877 (SLGL…LSGR) and 970-984 (QQRQ…QQQQ). The residue at position 863 (S863) is a Phosphoserine.

It belongs to the GIGYF family. As to quaternary structure, interacts with GRB10. This transient binding is increased under IGF1 stimulation and leads to recruitment of GIGYF1/GRB10 complex to IGF1 receptor. Interacts with DDX6. In terms of tissue distribution, ubiquitous. Lower expression in skeletal muscle, liver and testis.

Functionally, may act cooperatively with GRB10 to regulate tyrosine kinase receptor signaling. May increase IGF1 receptor phosphorylation under IGF1 stimulation as well as phosphorylation of IRS1 and SHC1. The sequence is that of GRB10-interacting GYF protein 1 (Gigyf1) from Mus musculus (Mouse).